The chain runs to 615 residues: (+)-alpha-pinene synthase TPS2, chloroplastic (615 aa).

Residues 1 to 55 (MHCMAVRHFAPSSSLSIFSSTNINNHFFGREIFTPKTSNITTKKSRSRPNCNPIQ) constitute a chloroplast transit peptide. Residues R330, D367, D371, R509, and D512 each contribute to the (2E)-geranyl diphosphate site. 2 residues coordinate Mg(2+): D367 and D371. A DDXXD motif motif is present at residues 367–371 (DDIYD). D512, T516, and E520 together coordinate Mg(2+).

This sequence belongs to the terpene synthase family. Tpsb subfamily. The cofactor is Mg(2+). Mn(2+) is required as a cofactor. It depends on K(+) as a cofactor. As to expression, trichome.

The protein localises to the plastid. Its subcellular location is the chloroplast. The catalysed reaction is (2E)-geranyl diphosphate = (1R,5R)-alpha-pinene + diphosphate. The enzyme catalyses (2E)-geranyl diphosphate = (1R,5R)-beta-pinene + diphosphate. It carries out the reaction (2E)-geranyl diphosphate = (4S)-limonene + diphosphate. It catalyses the reaction (2E)-geranyl diphosphate = beta-myrcene + diphosphate. The protein operates within secondary metabolite biosynthesis; terpenoid biosynthesis. Its pathway is terpene metabolism; (-)-alpha-pinene biosynthesis; (-)-alpha-pinene from geranyl diphosphate: step 1/1. Its function is as follows. Involved in monoterpene (C10) olefins biosynthesis, constituants of cannabinoids and terpenoids-rich resins. Catalyzes mainly the conversion of (2E)-geranyl diphosphate to (+)-alpha-pinene, and also produces minor products such as (-)-limonene, (+)-beta-pinene and beta-myrcene. The sequence is that of (+)-alpha-pinene synthase TPS2, chloroplastic from Cannabis sativa (Hemp).